Consider the following 382-residue polypeptide: tRNA(Ile)-lysidine synthase (382 aa).

ATP is bound at residue 50 to 55; the sequence is SGGRDS.

It belongs to the tRNA(Ile)-lysidine synthase family.

The protein resides in the cytoplasm. The catalysed reaction is cytidine(34) in tRNA(Ile2) + L-lysine + ATP = lysidine(34) in tRNA(Ile2) + AMP + diphosphate + H(+). Its function is as follows. Ligates lysine onto the cytidine present at position 34 of the AUA codon-specific tRNA(Ile) that contains the anticodon CAU, in an ATP-dependent manner. Cytidine is converted to lysidine, thus changing the amino acid specificity of the tRNA from methionine to isoleucine. This Bifidobacterium animalis subsp. lactis (strain AD011) protein is tRNA(Ile)-lysidine synthase.